The chain runs to 426 residues: Enolase (426 aa).

Gln-163 contributes to the (2R)-2-phosphoglycerate binding site. The active-site Proton donor is Glu-205. Asp-242, Glu-285, and Asp-312 together coordinate Mg(2+). Residues Lys-337, Arg-366, Ser-367, and Lys-388 each coordinate (2R)-2-phosphoglycerate. Lys-337 functions as the Proton acceptor in the catalytic mechanism.

It belongs to the enolase family. Mg(2+) serves as cofactor.

Its subcellular location is the cytoplasm. It localises to the secreted. The protein localises to the cell surface. It catalyses the reaction (2R)-2-phosphoglycerate = phosphoenolpyruvate + H2O. Its pathway is carbohydrate degradation; glycolysis; pyruvate from D-glyceraldehyde 3-phosphate: step 4/5. Catalyzes the reversible conversion of 2-phosphoglycerate (2-PG) into phosphoenolpyruvate (PEP). It is essential for the degradation of carbohydrates via glycolysis. The chain is Enolase from Nitrobacter winogradskyi (strain ATCC 25391 / DSM 10237 / CIP 104748 / NCIMB 11846 / Nb-255).